Consider the following 376-residue polypeptide: Putative clathrin assembly protein At1g25240 (376 aa).

The region spanning 25–156 (KTSFRNPDLD…FFLSDQIRRR (132 aa)) is the ENTH domain.

The protein resides in the membrane. Its subcellular location is the clathrin-coated pit. The protein localises to the golgi apparatus. It is found in the cytoplasmic vesicle. It localises to the clathrin-coated vesicle. This Arabidopsis thaliana (Mouse-ear cress) protein is Putative clathrin assembly protein At1g25240.